The chain runs to 115 residues: MTETTPEGIVNPPIDQLLEHVDSKYRLVLFAAKRARQINAYYSQLAEGLLENVGPLVETTNQEKPLSIAMREIQAGVVEAHEMDAEEIAAQAAAAQEAPAIELDDPFADLADPNA.

The protein belongs to the RNA polymerase subunit omega family. In terms of assembly, the RNAP catalytic core consists of 2 alpha, 1 beta, 1 beta' and 1 omega subunit. When a sigma factor is associated with the core the holoenzyme is formed, which can initiate transcription.

It carries out the reaction RNA(n) + a ribonucleoside 5'-triphosphate = RNA(n+1) + diphosphate. Promotes RNA polymerase assembly. Latches the N- and C-terminal regions of the beta' subunit thereby facilitating its interaction with the beta and alpha subunits. In Cutibacterium acnes (strain DSM 16379 / KPA171202) (Propionibacterium acnes), this protein is DNA-directed RNA polymerase subunit omega.